The sequence spans 592 residues: MDYSQEAITSLIWILQTLAITSVVFSFGIFLLVRFTQWGKQFWMFAGGYLSPKRSIKPILFFLLIVAMTLLSVRISLVNSEWYKNMYTSLQEFNEHVFWQQMGLFCVIAASSVSAALVSYYLEQRFVINWIEWLNEQLVNKWMAHRAYYKTQYLSENLDNPDQRIQQDVQSYVKTTLSLSTGVIDAVTSMISYTILLWGLAGPMIVLGVEIPHMMVFLVFGYVIFTTLIAFWLGRPLISLNFINERLNANYRYSLIRIKEYAESIAFYAGEKVEKNQLYQQFNAVIHNMWVIIFRTLKFSGFNLVVSQISVVFPLLIQVGRYFEKQIKLGDLMQTLQVFGQLHANLSFFRSTYDNFASYKATLDRLTGFCYAIEKANNKSQTQIHNHPTDVIFKNLSIQNPLGHTLIKHLNITLPQGTSLLIQGKSGAGKTTLLRTIAGLWSYAEGEINCPTHNQLFLSQKPYVPQGNLMSALAYPNNADNISHTQAVEILNKVQLGHLAEQLEKEQDWTRILSLGEQQRLAFARLILHKPAVAFLDEATASMDEGLEFSMYQLLQQELPQTTIISVGHRSTLKTLHQQQLILQDKGQWQVL.

The next 6 membrane-spanning stretches (helical) occupy residues 12-32 (IWIL…IFLL), 58-78 (PILF…ISLV), 102-122 (MGLF…SYYL), 191-211 (ISYT…GVEI), 214-234 (MMVF…FWLG), and 299-319 (FSGF…LIQV). The ABC transmembrane type-1 domain maps to 58 to 358 (PILFFLLIVA…FRSTYDNFAS (301 aa)). An ABC transporter domain is found at 391–592 (VIFKNLSIQN…LQDKGQWQVL (202 aa)). 424-431 (GKSGAGKT) contributes to the ATP binding site.

Belongs to the ABC transporter superfamily.

It localises to the cell inner membrane. This is an uncharacterized protein from Haemophilus influenzae (strain ATCC 51907 / DSM 11121 / KW20 / Rd).